The primary structure comprises 333 residues: MMEQLLQSTPSWTNVAIFFAIGVGLLLVVLGFVTYGILAERKVMGFMQGRIGPNQVGGRWGLLQTVADVLKLLLKEDTIPKAADRPLFILAPVIAFAPAFMVLAALPFTDALQFADIGVGLLYYIAVSGLTTIGVVTGAWASNNKYALLGGMRAAAQMISYEVPLVMSVIGVILLSGSLNLNDIVAAQKDVWFIVVQPIGFLVFLIAAVAELNRTPFDLPEAESELVAGFHVEYSGFRWAFFMLAEYVYFFAMAALTTVLFLGGWHPLPFLGFIPGAVWFALKFSLVVFLFIWFRITFPRVRADQLMEFGWKVLLPVALVNIFVTALVKQLFF.

8 helical membrane passes run 17–37, 88–108, 117–137, 159–179, 191–211, 241–261, 273–293, and 313–333; these read IFFAIGVGLLLVVLGFVTYGI, FILAPVIAFAPAFMVLAALPF, IGVGLLYYIAVSGLTTIGVVT, ISYEVPLVMSVIGVILLSGSL, VWFIVVQPIGFLVFLIAAVAE, FFMLAEYVYFFAMAALTTVLF, FIPGAVWFALKFSLVVFLFIW, and VLLPVALVNIFVTALVKQLFF.

The protein belongs to the complex I subunit 1 family. In terms of assembly, NDH-1 is composed of 14 different subunits. Subunits NuoA, H, J, K, L, M, N constitute the membrane sector of the complex.

It is found in the cell membrane. It catalyses the reaction a quinone + NADH + 5 H(+)(in) = a quinol + NAD(+) + 4 H(+)(out). In terms of biological role, NDH-1 shuttles electrons from NADH, via FMN and iron-sulfur (Fe-S) centers, to quinones in the respiratory chain. The immediate electron acceptor for the enzyme in this species is believed to be ubiquinone. Couples the redox reaction to proton translocation (for every two electrons transferred, four hydrogen ions are translocated across the cytoplasmic membrane), and thus conserves the redox energy in a proton gradient. This subunit may bind ubiquinone. The chain is NADH-quinone oxidoreductase subunit H from Anoxybacillus flavithermus (strain DSM 21510 / WK1).